We begin with the raw amino-acid sequence, 20 residues long: Phospholipase A2 D5 (20 aa).

Requires Ca(2+) as cofactor. Contains seven disulfide bonds. In terms of tissue distribution, expressed by the venom gland.

The protein resides in the secreted. It carries out the reaction a 1,2-diacyl-sn-glycero-3-phosphocholine + H2O = a 1-acyl-sn-glycero-3-phosphocholine + a fatty acid + H(+). Functionally, PLA2 catalyzes the calcium-dependent hydrolysis of the 2-acyl groups in 3-sn-phosphoglycerides. The sequence is that of Phospholipase A2 D5 from Micrurus pyrrhocryptus (Coral snake).